The primary structure comprises 123 residues: Protein Wnt-7 (123 aa).

Ser-1 carries the O-palmitoleoyl serine; by PORCN lipid modification. An intrachain disulfide couples Cys-89 to Cys-104. N-linked (GlcNAc...) asparagine glycosylation is present at Asn-90.

The protein belongs to the Wnt family. Palmitoleoylation is required for efficient binding to frizzled receptors. Depalmitoleoylation leads to Wnt signaling pathway inhibition.

The protein localises to the secreted. It localises to the extracellular space. It is found in the extracellular matrix. In terms of biological role, ligand for members of the frizzled family of seven transmembrane receptors. Probable developmental protein. May be a signaling molecule which affects the development of discrete regions of tissues. Is likely to signal over only few cell diameters. The sequence is that of Protein Wnt-7 (WNT-7) from Evasterias troschelii (Mottled sea star).